A 125-amino-acid polypeptide reads, in one-letter code: Large ribosomal subunit protein bL12 (125 aa).

It belongs to the bacterial ribosomal protein bL12 family. Homodimer. Part of the ribosomal stalk of the 50S ribosomal subunit. Forms a multimeric L10(L12)X complex, where L10 forms an elongated spine to which 2 to 4 L12 dimers bind in a sequential fashion. Binds GTP-bound translation factors.

Forms part of the ribosomal stalk which helps the ribosome interact with GTP-bound translation factors. Is thus essential for accurate translation. The polypeptide is Large ribosomal subunit protein bL12 (Chlorobium limicola (strain DSM 245 / NBRC 103803 / 6330)).